The primary structure comprises 108 residues: Tubulin-specific chaperone A (108 aa).

Residue Ala-2 is modified to N-acetylalanine.

It belongs to the TBCA family. In terms of assembly, supercomplex made of cofactors A to E. Cofactors A and D function by capturing and stabilizing tubulin in a quasi-native conformation. Cofactor E binds to the cofactor D-tubulin complex; interaction with cofactor C then causes the release of tubulin polypeptides that are committed to the native state.

The protein localises to the cytoplasm. It localises to the cytoskeleton. Its function is as follows. Tubulin-folding protein; involved in the early step of the tubulin folding pathway. This Oryctolagus cuniculus (Rabbit) protein is Tubulin-specific chaperone A (TBCA).